A 505-amino-acid polypeptide reads, in one-letter code: Cytochrome P450 2K6 (505 aa).

A helical membrane pass occupies residues 7 to 27; sequence FLLQGSPTGTILGALLLFLVI. Residue Cys448 coordinates heme.

Belongs to the cytochrome P450 family. Heme serves as cofactor. As to expression, detected in liver and ovary.

Its subcellular location is the endoplasmic reticulum membrane. The protein resides in the microsome membrane. Its function is as follows. Metabolizes aflatoxin B1 (AFB1) to the cytotoxic derivative AFB1 exo-8,9-epoxide. Does not show activity towards lauric acid. This is Cytochrome P450 2K6 from Danio rerio (Zebrafish).